The sequence spans 220 residues: 3-dehydroquinate dehydratase (220 aa).

3-dehydroquinate is bound by residues S8, 30–32, and R63; that span reads ELR. H114 (proton donor/acceptor) is an active-site residue. Catalysis depends on K140, which acts as the Schiff-base intermediate with substrate. The 3-dehydroquinate site is built by R174 and Q197.

Belongs to the type-I 3-dehydroquinase family. In terms of assembly, homodimer.

The catalysed reaction is 3-dehydroquinate = 3-dehydroshikimate + H2O. It participates in metabolic intermediate biosynthesis; chorismate biosynthesis; chorismate from D-erythrose 4-phosphate and phosphoenolpyruvate: step 3/7. Functionally, involved in the third step of the chorismate pathway, which leads to the biosynthesis of aromatic amino acids. Catalyzes the cis-dehydration of 3-dehydroquinate (DHQ) and introduces the first double bond of the aromatic ring to yield 3-dehydroshikimate. This chain is 3-dehydroquinate dehydratase, found in Saccharolobus solfataricus (strain ATCC 35092 / DSM 1617 / JCM 11322 / P2) (Sulfolobus solfataricus).